Here is a 122-residue protein sequence, read N- to C-terminus: Large ribosomal subunit protein uL14 (122 aa).

Belongs to the universal ribosomal protein uL14 family. In terms of assembly, part of the 50S ribosomal subunit. Forms a cluster with proteins L3 and L19. In the 70S ribosome, L14 and L19 interact and together make contacts with the 16S rRNA in bridges B5 and B8.

Binds to 23S rRNA. Forms part of two intersubunit bridges in the 70S ribosome. The protein is Large ribosomal subunit protein uL14 of Bacillus anthracis (strain A0248).